Here is a 45-residue protein sequence, read N- to C-terminus: Small polypeptide DEVIL 2 (45 aa).

Residues 14–45 (SQSRRLGKYLKEQKGRIYIIRRCVMMLLCSHD) form a required for DVL/RTFL small polypeptide activity region. A helical membrane pass occupies residues 17–33 (RRLGKYLKEQKGRIYII).

This sequence belongs to the DVL/RTFL small polypeptides family. Mostly expressed in stems and, to a lower extent, in roots and leaves.

It is found in the cell membrane. Functionally, small polypeptide acting as a regulatory molecule which coordinates cellular responses required for differentiation, growth and development, including leaves shape, pedicule elongation, inflorescence organization and fruit maturation, probably by restricting polar cell proliferation in lateral organs and coordinating socket cell recruitment and differentiation at trichome sites. In Arabidopsis thaliana (Mouse-ear cress), this protein is Small polypeptide DEVIL 2.